Here is a 574-residue protein sequence, read N- to C-terminus: Galactose transporter (574 aa).

Positions 1 to 57 (MAVEENNMPVVSQQPQAGEDVISSLSKDSHLSAQSQKYSNDELKAGESGSEGSQSVP) are disordered. At 1–70 (MAVEENNMPV…PKKPMSEYVT (70 aa)) the chain is on the cytoplasmic side. Over residues 23–38 (SSLSKDSHLSAQSQKY) the composition is skewed to polar residues. A phosphoserine mark is found at serine 32, serine 35, serine 39, serine 48, serine 50, serine 53, and serine 55. The helical transmembrane segment at 71–91 (VSLLCLCVAFGGFMFGWDTGT) threads the bilayer. Residues 92–121 (ISGFVVQTDFLRRFGMKHKDGTHYLSNVRT) are Extracellular-facing. A helical membrane pass occupies residues 122–142 (GLIVAIFNIGCAFGGIILSKG). Residues 143–149 (GDMYGRK) are Cytoplasmic-facing. The chain crosses the membrane as a helical span at residues 150–170 (KGLSIVVSVYIVGIIIQIASI). The Extracellular portion of the chain corresponds to 171–175 (NKWYQ). Residues 176-196 (YFIGRIISGLGVGGIAVLCPM) form a helical membrane-spanning segment. The Cytoplasmic segment spans residues 197-207 (LISEIAPKHLR). Residues 208-228 (GTLVSCYQLMITAGIFLGYCT) traverse the membrane as a helical segment. At 229 to 242 (NYGTKSYSNSVQWR) the chain is on the extracellular side. The helical transmembrane segment at 243-263 (VPLGLCFAWSLFMIGALTLVP) threads the bilayer. Residues 264-342 (ESPRYLCEVN…MGVFVQMFQQ (79 aa)) lie on the Cytoplasmic side of the membrane. The helical transmembrane segment at 343 to 362 (LTGNNYFFYYGTVIFKSVGL) threads the bilayer. Over 363–366 (DDSF) the chain is Extracellular. A helical transmembrane segment spans residues 367–387 (ETSIVIGVVNFASTFFSLWTV). Residues 388–394 (ENLGHRK) lie on the Cytoplasmic side of the membrane. The helical transmembrane segment at 395 to 415 (CLLLGAATMMACMVIYASVGV) threads the bilayer. The Extracellular segment spans residues 416-435 (TRLYPHGKSQPSSKGAGNCM). Residues 436–456 (IVFTCFYIFCYATTWAPVAWV) form a helical membrane-spanning segment. Residues 457 to 472 (ITAESFPLRVKSKCMA) are Cytoplasmic-facing. Residues 473-493 (LASASNWVWGFLIAFFTPFIT) traverse the membrane as a helical segment. Topologically, residues 494-499 (SAINFY) are extracellular. Residues 500–520 (YGYVFMGCLVAMFFYVFFFVP) traverse the membrane as a helical segment. The Cytoplasmic segment spans residues 521 to 574 (ETKGLSLEEIQELWEEGVLPWKSEGWIPSSRRGNNYDLEDLQHDDKPWYKAMLE).

The protein belongs to the major facilitator superfamily. Sugar transporter (TC 2.A.1.1) family.

The protein localises to the membrane. Functionally, GAL2 is a facilitated diffusion transporter required for both the high-affinity galactokinase-dependent and low-affinity galactokinase-independent galactose transport processes. This chain is Galactose transporter (GAL2), found in Saccharomyces cerevisiae (strain ATCC 204508 / S288c) (Baker's yeast).